A 194-amino-acid chain; its full sequence is MRTATKTRVTAETSIELSINLDSAAESTIATGIGFLDHMLTLFAKHSRINLNVKADGDTRVDAHHTVEDVGITLGICLKEALGDKASINRYGSTYVPMDESLGFCALDLSGRSYLVFDAELTNPKLGDFDTELVEEFFQAVAFNTGMNLHLRVLYGKNTHHKIESLFKAFGRALREAITINPEIKGVNSTKGVL.

The protein belongs to the imidazoleglycerol-phosphate dehydratase family.

It localises to the cytoplasm. The enzyme catalyses D-erythro-1-(imidazol-4-yl)glycerol 3-phosphate = 3-(imidazol-4-yl)-2-oxopropyl phosphate + H2O. Its pathway is amino-acid biosynthesis; L-histidine biosynthesis; L-histidine from 5-phospho-alpha-D-ribose 1-diphosphate: step 6/9. This chain is Imidazoleglycerol-phosphate dehydratase, found in Listeria welshimeri serovar 6b (strain ATCC 35897 / DSM 20650 / CCUG 15529 / CIP 8149 / NCTC 11857 / SLCC 5334 / V8).